Reading from the N-terminus, the 206-residue chain is Riboflavin transporter RibU (206 aa).

Helical transmembrane passes span 7–27 (MVLIAMLAALSTILLLPILQF), 42–62 (IIPVLIGVFTLGLGDGFIILF), 79–99 (WIGVPMNFVALGIFMAIVWFF), 113–133 (IVLATIASVLVMMVLNVFYAL), 147–169 (IFAGATHLFNMGSLSVTLNPTYL), and 173–195 (VLPFNALQYIIFALVFGLIVTVF).

It belongs to the prokaryotic riboflavin transporter (P-RFT) (TC 2.A.87) family. In E.coli forms a stable energy-coupling factor (ECF) transporter complex composed of 2 membrane-embedded substrate-binding protein (S component), 2 ATP-binding proteins (A and A' components) and 2 transmembrane proteins (T component), probably with a stoichiometry of 2:1:1:2. May be able to interact with more than 1 S component at a time.

The protein localises to the cell membrane. Functionally, mediates riboflavin uptake, may also transport FMN and roseoflavin. Probably a riboflavin-binding protein that interacts with the energy-coupling factor (ECF) ABC-transporter complex. Unlike classic ABC transporters this ECF transporter provides the energy necessary to transport a number of different substrates. The substrates themselves are bound by transmembrane, not extracytoplasmic soluble proteins. Uptake of riboflavin into proteosomes containing EcfA1A2T and RibU has been demonstrated. Uptake requires hydrolyzable Mg-ATP. The polypeptide is Riboflavin transporter RibU (ribU) (Lactococcus lactis subsp. cremoris (strain MG1363)).